Here is a 668-residue protein sequence, read N- to C-terminus: Packaging protein UL32 homolog (668 aa).

The segment covering 1-10 (MNPSTHVSSN) has biased composition (polar residues). The interval 1–35 (MNPSTHVSSNGPTTPPHGPHTTFLPPTSPAPSTSS) is disordered. Positions 19-35 (PHTTFLPPTSPAPSTSS) are enriched in low complexity. Residues Cys-200, Cys-203, His-276, and Cys-282 each contribute to the Zn(2+) site. The tract at residues 200 to 282 (CNLCAIISIC…FHLHFFINRC (83 aa)) is zinc finger 1. Residues 401 to 430 (IEEEEDEEGGEKGGDDPGRHNGGGTSGGFS) are disordered. Positions 410–419 (GEKGGDDPGR) are enriched in basic and acidic residues. Residues Cys-459, Cys-462, His-567, and Cys-574 each coordinate Zn(2+). The zinc finger 2 stretch occupies residues 459-574 (CLLCELMACS…YKHFFCDPQC (116 aa)).

This sequence belongs to the herpesviridae UL32 protein family.

It is found in the host cytoplasm. Its subcellular location is the host nucleus. Plays a role in efficient localization of neo-synthesized capsids to nuclear replication compartments, thereby controlling cleavage and packaging of virus genomic DNA. The polypeptide is Packaging protein UL32 homolog (UL52) (Homo sapiens (Human)).